The following is a 295-amino-acid chain: sn-glycerol-3-phosphate transport system permease protein UgpA (295 aa).

Over 1–11 (MSSSRPVFRSR) the chain is Cytoplasmic. The helical transmembrane segment at 12-32 (WLPYLLVAPQLIITVIFFIWP) threads the bilayer. Residues 33-80 (AGEALWYSLQSVDPFGFSSQFVGLDNFVTLFHDSYYLDAFWTTIKFST) lie on the Periplasmic side of the membrane. The ABC transmembrane type-1 domain occupies 76–284 (IKFSTFVTVS…FLVIVLTVVQ (209 aa)). A helical transmembrane segment spans residues 81–101 (FVTVSGLLVSLFFAALVEYIV). Over 102-109 (RGSRFYQT) the chain is Cytoplasmic. Residues 110 to 130 (LMLLPYAVAPAVAAVLWIFLF) traverse the membrane as a helical segment. The Periplasmic portion of the chain corresponds to 131 to 156 (NPGRGLITHFLAEFGYDWNHAQNSGQ). The helical transmembrane segment at 157–177 (AMFLVVFASVWKQISYNFLFF) threads the bilayer. Over 178–207 (YAALQSIPRSLIEAAAIDGAGPIRRFFKIA) the chain is Cytoplasmic. Residues 208–228 (LPLIAPVSFFLLVVNLVYAFF) form a helical membrane-spanning segment. At 229 to 262 (DTFPVIDAATSGGPVQATTTLIYKIYREGFTGLD) the chain is on the periplasmic side. The chain crosses the membrane as a helical span at residues 263–283 (LASSAAQSVVLMFLVIVLTVV). Residues 284-295 (QFRYVESKVRYQ) are Cytoplasmic-facing.

The protein belongs to the binding-protein-dependent transport system permease family. UgpAE subfamily. In terms of assembly, the complex is composed of two ATP-binding proteins (UgpC), two transmembrane proteins (UgpA and UgpE) and a solute-binding protein (UgpB).

It is found in the cell inner membrane. In terms of biological role, part of the ABC transporter complex UgpBAEC involved in sn-glycerol-3-phosphate (G3P) import. Probably responsible for the translocation of the substrate across the membrane. This is sn-glycerol-3-phosphate transport system permease protein UgpA (ugpA) from Escherichia coli (strain UTI89 / UPEC).